The primary structure comprises 251 residues: MRRKIVAGNWKLHGSRAFATELVAKVAAHMPLEGVEVVILPPLPYLGDLIEDFEAHHLSFGAQDVSSNEKGAYTGEVSASMLVDVGAGYGLVGHSERRQYHHESSELVARKFAAAIHAGLIPVLCVGESLEQREAGQTEAILRAQLDPVLALVGSAGFAGAVLAYEPIWAIGTGRTATPEQAQAVHAFLRGEVAKADARIADSLPILYGGSVKPDNAGELFAQPDVDGGLVGGASLVAEDFLAIARAAAAC.

9-11 (NWK) is a substrate binding site. Histidine 94 acts as the Electrophile in catalysis. Glutamate 166 (proton acceptor) is an active-site residue. Substrate contacts are provided by residues glycine 172, serine 211, and 232–233 (GG).

Belongs to the triosephosphate isomerase family. As to quaternary structure, homodimer.

It is found in the cytoplasm. It catalyses the reaction D-glyceraldehyde 3-phosphate = dihydroxyacetone phosphate. The protein operates within carbohydrate biosynthesis; gluconeogenesis. It functions in the pathway carbohydrate degradation; glycolysis; D-glyceraldehyde 3-phosphate from glycerone phosphate: step 1/1. Functionally, involved in the gluconeogenesis. Catalyzes stereospecifically the conversion of dihydroxyacetone phosphate (DHAP) to D-glyceraldehyde-3-phosphate (G3P). The sequence is that of Triosephosphate isomerase from Xanthomonas euvesicatoria pv. vesicatoria (strain 85-10) (Xanthomonas campestris pv. vesicatoria).